The following is a 193-amino-acid chain: Flagellar transcriptional regulator FlhC (193 aa).

Zn(2+) is bound by residues C138, C141, C158, and C161.

Belongs to the FlhC family. Heterohexamer composed of two FlhC and four FlhD subunits. Each FlhC binds a FlhD dimer, forming a heterotrimer, and a hexamer assembles by dimerization of two heterotrimers. The cofactor is Zn(2+).

The protein localises to the cytoplasm. In terms of biological role, functions in complex with FlhD as a master transcriptional regulator that regulates transcription of several flagellar and non-flagellar operons by binding to their promoter region. Activates expression of class 2 flagellar genes, including fliA, which is a flagellum-specific sigma factor that turns on the class 3 genes. Also regulates genes whose products function in a variety of physiological pathways. In Proteus mirabilis, this protein is Flagellar transcriptional regulator FlhC.